The following is a 40-amino-acid chain: MADTTGRIPLWIIGTVTGILVIGLIGIFFYGSYSGLGSSL.

The helical transmembrane segment at 8 to 28 threads the bilayer; that stretch reads IPLWIIGTVTGILVIGLIGIF.

It belongs to the PsbJ family. PSII is composed of 1 copy each of membrane proteins PsbA, PsbB, PsbC, PsbD, PsbE, PsbF, PsbH, PsbI, PsbJ, PsbK, PsbL, PsbM, PsbT, PsbX, PsbY, PsbZ, Psb30/Ycf12, at least 3 peripheral proteins of the oxygen-evolving complex and a large number of cofactors. It forms dimeric complexes.

The protein resides in the plastid. The protein localises to the chloroplast thylakoid membrane. In terms of biological role, one of the components of the core complex of photosystem II (PSII). PSII is a light-driven water:plastoquinone oxidoreductase that uses light energy to abstract electrons from H(2)O, generating O(2) and a proton gradient subsequently used for ATP formation. It consists of a core antenna complex that captures photons, and an electron transfer chain that converts photonic excitation into a charge separation. The chain is Photosystem II reaction center protein J from Eucalyptus globulus subsp. globulus (Tasmanian blue gum).